Reading from the N-terminus, the 115-residue chain is Large ribosomal subunit protein bL19 (115 aa).

The protein belongs to the bacterial ribosomal protein bL19 family.

This protein is located at the 30S-50S ribosomal subunit interface and may play a role in the structure and function of the aminoacyl-tRNA binding site. The protein is Large ribosomal subunit protein bL19 of Syntrophotalea carbinolica (strain DSM 2380 / NBRC 103641 / GraBd1) (Pelobacter carbinolicus).